Consider the following 240-residue polypeptide: Zein-alpha 19C2 (240 aa).

A signal peptide spans 1-21 (MATKIFSLLMLLALSTCVANA).

Belongs to the zein family. As to quaternary structure, interacts with OP10 (via N-terminus).

Functionally, zeins are major seed storage proteins. The chain is Zein-alpha 19C2 from Zea mays (Maize).